The sequence spans 200 residues: MARCKS-related protein (200 aa).

Positions 1-200 (MGSQSSKAPR…PTPASAEQNE (200 aa)) are disordered. Gly-2 is lipidated: N-myristoyl glycine. Thr-14 carries the phosphothreonine modification. The segment covering 16–26 (EEAAGASPAKA) has biased composition (low complexity). A phosphoserine mark is found at Ser-22, Ser-36, and Ser-48. The span at 53 to 64 (GTDEAAGATGDA) shows a compositional bias: low complexity. Ser-71 is modified (phosphoserine). Basic and acidic residues predominate over residues 74-85 (AEAKGEVAPKET). Position 85 is a phosphothreonine (Thr-85). A compositionally biased stretch (basic residues) spans 86 to 98 (PKKKKKFSFKKPF). The segment at 87–110 (KKKKKFSFKKPFKLSGLSFKRNRK) is effector domain involved in lipid-binding and calmodulin-binding. Ser-93, Ser-101, and Ser-104 each carry phosphoserine; by PKC. Ser-119 carries the post-translational modification Phosphoserine. The residue at position 120 (Ser-120) is a Phosphoserine; by MAPK8. Phosphoserine occurs at positions 132 and 135. Thr-148 carries the phosphothreonine; by MAPK8 modification. Ser-151, Ser-162, and Ser-165 each carry phosphoserine. Residues 156 to 165 (AKGAEASAAS) are compositionally biased toward low complexity. The residue at position 170 (Thr-170) is a Phosphothreonine. The segment covering 178-200 (AAEPSTPSGPESGPTPASAEQNE) has biased composition (low complexity). Thr-183 carries the phosphothreonine; by MAPK8 modification. A Phosphothreonine modification is found at Thr-192.

The protein belongs to the MARCKS family. As to quaternary structure, binds to filamentous actin (F-actin), but not to monomeric G-actin, independently of its phosphorylation status. Interacts with calmodulin. Post-translationally, phosphorylated. Phosphorylation at Ser-120 and Thr-183 is non-redundantly catalyzed by MAPK8 in vivo. Phosphorylation at Thr-148 is preferentially catalyzed by MAPK8 in vivo, but this modification can also be catalyzed by other kinases in the absence of MAPK8. May be phosphorylated by protein kinase C, which disrupts the interaction with calmodulin. As to expression, expressed at high levels in brain cortex and hippocampus, including dentate gyrus, anterior olfactory nucleus, primary olfactory cortex, entorhinal cortex, medial preoptic area and dorsomedial hypothalamic nucleus (at protein level). Expressed in neuronal cells (at protein level). Detected in the retina. Strongly expressed in testis and uterus; expressed at lower levels in cerebellum, cerebrum, adipose tissue, spleen, kidney, thyroid, liver, lung, skeletal muscle and heart. Detected in T-cells and B-cells.

It is found in the cytoplasm. The protein resides in the cytoskeleton. The protein localises to the cell membrane. Its function is as follows. Involved in the control of cell movement by regulating actin cytoskeleton homeostasis and filopodium and lamellipodium formation. When unphosphorylated, induces cell migration. When phosphorylated by MAPK8, induces actin bundles formation and stabilization, thereby reducing actin plasticity, hence restricting cell movement, including neuronal migration. May be involved in coupling the protein kinase C and calmodulin signal transduction systems. This chain is MARCKS-related protein (Marcksl1), found in Mus musculus (Mouse).